Consider the following 350-residue polypeptide: Mannonate dehydratase (350 aa).

It belongs to the mannonate dehydratase family. The cofactor is Fe(2+). Mn(2+) serves as cofactor.

The catalysed reaction is D-mannonate = 2-dehydro-3-deoxy-D-gluconate + H2O. The protein operates within carbohydrate metabolism; pentose and glucuronate interconversion. Functionally, catalyzes the dehydration of D-mannonate. In Clostridium perfringens (strain 13 / Type A), this protein is Mannonate dehydratase.